The following is a 206-amino-acid chain: Imidazole glycerol phosphate synthase subunit HisH (206 aa).

Residues 1 to 206 (MIVIIDYGMG…LRILKNFGDM (206 aa)) enclose the Glutamine amidotransferase type-1 domain. C79 serves as the catalytic Nucleophile. Residues H188 and E190 contribute to the active site.

As to quaternary structure, heterodimer of HisH and HisF.

The protein localises to the cytoplasm. The enzyme catalyses 5-[(5-phospho-1-deoxy-D-ribulos-1-ylimino)methylamino]-1-(5-phospho-beta-D-ribosyl)imidazole-4-carboxamide + L-glutamine = D-erythro-1-(imidazol-4-yl)glycerol 3-phosphate + 5-amino-1-(5-phospho-beta-D-ribosyl)imidazole-4-carboxamide + L-glutamate + H(+). It catalyses the reaction L-glutamine + H2O = L-glutamate + NH4(+). It functions in the pathway amino-acid biosynthesis; L-histidine biosynthesis; L-histidine from 5-phospho-alpha-D-ribose 1-diphosphate: step 5/9. IGPS catalyzes the conversion of PRFAR and glutamine to IGP, AICAR and glutamate. The HisH subunit catalyzes the hydrolysis of glutamine to glutamate and ammonia as part of the synthesis of IGP and AICAR. The resulting ammonia molecule is channeled to the active site of HisF. The sequence is that of Imidazole glycerol phosphate synthase subunit HisH from Syntrophotalea carbinolica (strain DSM 2380 / NBRC 103641 / GraBd1) (Pelobacter carbinolicus).